Here is a 430-residue protein sequence, read N- to C-terminus: uncharacterized protein (430 aa).

This is an uncharacterized protein from Escherichia coli (strain K12).